Reading from the N-terminus, the 146-residue chain is Hemoglobin subunit beta-1 (146 aa).

A Globin domain is found at 2–146 (HWTEKERTII…VVSALGKQYH (145 aa)). Heme b-binding residues include H63 and H92.

This sequence belongs to the globin family. Hb1 is a heterotetramer of two alpha chains and two beta-1 chains. As to expression, red blood cells.

Involved in oxygen transport from gills to the various peripheral tissues. In Dissostichus eleginoides (Patagonian toothfish), this protein is Hemoglobin subunit beta-1.